Reading from the N-terminus, the 34-residue chain is MSDIN-like toxin proprotein 3 (34 aa).

A propeptide spanning residues 1-10 is cleaved from the precursor; it reads MSDINTARLP. Positions 11–20 form a cross-link, cyclopeptide (Phe-Pro); that stretch reads FFQPPEFRPP. Positions 21–34 are excised as a propeptide; sequence CVGDDIEMVLTRGE.

This sequence belongs to the MSDIN fungal toxin family. Processed by the macrocyclase-peptidase enzyme POPB to yield a toxic cyclic decapeptide. POPB first removes 10 residues from the N-terminus. Conformational trapping of the remaining peptide forces the enzyme to release this intermediate rather than proceed to macrocyclization. The enzyme rebinds the remaining peptide in a different conformation and catalyzes macrocyclization of the N-terminal 10 residues.

In terms of biological role, probable toxin that belongs to the MSDIN-like toxin family responsible for a large number of food poisoning cases and deaths. This is MSDIN-like toxin proprotein 3 from Amanita bisporigera (Destroying angel).